The chain runs to 952 residues: Eukaryotic translation initiation factor 3 subunit A (952 aa).

Residues 315–491 enclose the PCI domain; it reads HAERAGIVND…QTITFVSTPP (177 aa). Residues 522 to 849 adopt a coiled-coil conformation; it reads DAFAAAIAQA…RRQAEKAAAT (328 aa). Basic and acidic residues predominate over residues 757-797; the sequence is EKVIKRKREEKERKLKEAREAEERKRKEEEEAAQKAEEEAR. Residues 757–952 are disordered; it reads EKVIKRKREE…RGMPSTRGGA (196 aa). Positions 798-809 are enriched in low complexity; that stretch reads AAAALEAEAAAA. Positions 810-844 are enriched in basic and acidic residues; that stretch reads EQRRAEREAQRQSDLERIRAQQEREEEALRRRQAE. 2 stretches are compositionally biased toward low complexity: residues 856–878 and 893–918; these read RPPARAGTTPPTASPAPSSGGPS and GAPVASSPKPVPSNSAAASAPASNGP.

This sequence belongs to the eIF-3 subunit A family. Component of the eukaryotic translation initiation factor 3 (eIF-3) complex.

It is found in the cytoplasm. Its function is as follows. RNA-binding component of the eukaryotic translation initiation factor 3 (eIF-3) complex, which is involved in protein synthesis of a specialized repertoire of mRNAs and, together with other initiation factors, stimulates binding of mRNA and methionyl-tRNAi to the 40S ribosome. The eIF-3 complex specifically targets and initiates translation of a subset of mRNAs involved in cell proliferation. This Cryptococcus neoformans var. neoformans serotype D (strain B-3501A) (Filobasidiella neoformans) protein is Eukaryotic translation initiation factor 3 subunit A.